The following is a 334-amino-acid chain: Probable 3-hydroxyisobutyrate dehydrogenase-like 1, mitochondrial (334 aa).

Residues 1–23 (MPLLLRRFPSPSVVSSFFLRRSM) constitute a mitochondrion transit peptide. Ala-24 carries the post-translational modification N-acetylalanine. NAD(+) is bound by residues 38–67 (TKIGWIGTGVMGRSMCGHLIKAGYTVTVFN) and Thr-133. The active site involves Lys-207. Lys-275 provides a ligand contact to NAD(+).

This sequence belongs to the HIBADH-related family. 3-hydroxyisobutyrate dehydrogenase subfamily.

It is found in the mitochondrion. The enzyme catalyses 3-hydroxy-2-methylpropanoate + NAD(+) = 2-methyl-3-oxopropanoate + NADH + H(+). The protein operates within amino-acid degradation; L-valine degradation. The polypeptide is Probable 3-hydroxyisobutyrate dehydrogenase-like 1, mitochondrial (Arabidopsis thaliana (Mouse-ear cress)).